We begin with the raw amino-acid sequence, 120 residues long: NAD(P)H-quinone oxidoreductase subunit 3 (120 aa).

3 helical membrane-spanning segments follow: residues methionine 1 to proline 21, methionine 64 to valine 84, and leucine 89 to valine 109.

Belongs to the complex I subunit 3 family. As to quaternary structure, NDH-1 can be composed of about 15 different subunits; different subcomplexes with different compositions have been identified which probably have different functions.

It localises to the cellular thylakoid membrane. The enzyme catalyses a plastoquinone + NADH + (n+1) H(+)(in) = a plastoquinol + NAD(+) + n H(+)(out). It catalyses the reaction a plastoquinone + NADPH + (n+1) H(+)(in) = a plastoquinol + NADP(+) + n H(+)(out). Its function is as follows. NDH-1 shuttles electrons from an unknown electron donor, via FMN and iron-sulfur (Fe-S) centers, to quinones in the respiratory and/or the photosynthetic chain. The immediate electron acceptor for the enzyme in this species is believed to be plastoquinone. Couples the redox reaction to proton translocation, and thus conserves the redox energy in a proton gradient. Cyanobacterial NDH-1 also plays a role in inorganic carbon-concentration. This chain is NAD(P)H-quinone oxidoreductase subunit 3, found in Trichormus variabilis (strain ATCC 29413 / PCC 7937) (Anabaena variabilis).